A 341-amino-acid chain; its full sequence is Methionine import ATP-binding protein MetN 2 (341 aa).

Residues I2–V241 enclose the ABC transporter domain. G38 to S45 contributes to the ATP binding site.

It belongs to the ABC transporter superfamily. Methionine importer (TC 3.A.1.24) family. In terms of assembly, the complex is composed of two ATP-binding proteins (MetN), two transmembrane proteins (MetI) and a solute-binding protein (MetQ).

The protein localises to the cell membrane. It catalyses the reaction L-methionine(out) + ATP + H2O = L-methionine(in) + ADP + phosphate + H(+). The catalysed reaction is D-methionine(out) + ATP + H2O = D-methionine(in) + ADP + phosphate + H(+). In terms of biological role, part of the ABC transporter complex MetNIQ involved in methionine import. Responsible for energy coupling to the transport system. The polypeptide is Methionine import ATP-binding protein MetN 2 (Staphylococcus aureus (strain USA300)).